We begin with the raw amino-acid sequence, 349 residues long: 1-acylglycerol-3-phosphate O-acyltransferase ABHD5 (349 aa).

Ala-2 carries the post-translational modification N-acetylalanine. The AB hydrolase-1 domain maps to 77-184; sequence PLVLLHGFGG…LVEPWGFPER (108 aa). Phosphoserine is present on Ser-122. The short motif at 327 to 332 is the HXXXXD motif element; it reads HYVYAD.

This sequence belongs to the peptidase S33 family. ABHD4/ABHD5 subfamily. In terms of assembly, interacts with ADRP, PLIN and PNPLA2. Interacts with PLIN5; promotes interaction with PNPLA2. In terms of tissue distribution, widely expressed in various tissues, including lymphocytes, liver, skeletal muscle and brain. Expressed by upper epidermal layers and dermal fibroblasts in skin, hepatocytes and neurons (at protein level).

It localises to the cytoplasm. The protein localises to the lipid droplet. Its subcellular location is the cytosol. It carries out the reaction a 1-acyl-sn-glycero-3-phosphate + an acyl-CoA = a 1,2-diacyl-sn-glycero-3-phosphate + CoA. The enzyme catalyses 1-(9Z-octadecenoyl)-sn-glycero-3-phosphate + hexadecanoyl-CoA = 1-(9Z)-octadecenoyl-2-hexadecanoyl-sn-glycero-3-phosphate + CoA. It catalyses the reaction 1-(9Z-octadecenoyl)-sn-glycero-3-phosphate + octadecanoyl-CoA = 1-(9Z-octadecenoyl)-2-octadecanoyl-sn-glycero-3-phosphate + CoA. The catalysed reaction is 1-(9Z-octadecenoyl)-sn-glycero-3-phosphate + (9Z)-octadecenoyl-CoA = 1,2-di-(9Z-octadecenoyl)-sn-glycero-3-phosphate + CoA. It carries out the reaction 1-(9Z-octadecenoyl)-sn-glycero-3-phosphate + (5Z,8Z,11Z,14Z)-eicosatetraenoyl-CoA = 1-(9Z)-octadecenoyl-2-(5Z,8Z,11Z,14Z)-eicosatetraenoyl-sn-glycero-3-phosphate + CoA. The enzyme catalyses eicosanoyl-CoA + 1-(9Z-octadecenoyl)-sn-glycero-3-phosphate = 1-(9Z)-octadecenoyl-2-eicosanoyl-sn-glycero-3-phosphate + CoA. It catalyses the reaction 1-hexadecanoyl-sn-glycero-3-phosphate + (9Z)-octadecenoyl-CoA = 1-hexadecanoyl-2-(9Z-octadecenoyl)-sn-glycero-3-phosphate + CoA. The catalysed reaction is 1-octadecanoyl-sn-glycero-3-phosphate + (9Z)-octadecenoyl-CoA = 1-octadecanoyl-2-(9Z-octadecenoyl)-sn-glycero-3-phosphate + CoA. It carries out the reaction 1-(5Z,8Z,11Z,14Z-eicosatetraenoyl)-sn-glycero-3-phosphate + (9Z)-octadecenoyl-CoA = 1-(5Z,8Z,11Z,14Z)-eicosatetraenoyl-2-(9Z)-octadecenoyl-sn-glycero-3-phosphate + CoA. With respect to regulation, acyltransferase activity is inhibited by detergents such as Triton X-100 and 3-[(3-cholamidopropyl)dimethylammonio]-1-propanesulfonate (CHAPS). Acyltransferase activity is inhibited by the presence of magnesium and calcium. Coenzyme A-dependent lysophosphatidic acid acyltransferase that catalyzes the transfer of an acyl group on a lysophosphatidic acid. Functions preferentially with 1-oleoyl-lysophosphatidic acid followed by 1-palmitoyl-lysophosphatidic acid, 1-stearoyl-lysophosphatidic acid and 1-arachidonoyl-lysophosphatidic acid as lipid acceptor. Functions preferentially with arachidonoyl-CoA followed by oleoyl-CoA as acyl group donors. Functions in phosphatidic acid biosynthesis. May regulate the cellular storage of triacylglycerol through activation of the phospholipase PNPLA2. Involved in keratinocyte differentiation. Regulates lipid droplet fusion. This Homo sapiens (Human) protein is 1-acylglycerol-3-phosphate O-acyltransferase ABHD5.